Here is a 233-residue protein sequence, read N- to C-terminus: Purine nucleoside phosphorylase DeoD-type (233 aa).

Position 4 (His-4) interacts with a purine D-ribonucleoside. Phosphate contacts are provided by residues Gly-20, Arg-24, Arg-43, and 87 to 90 (RIGT). Residues 179-181 (EME) and 203-204 (SD) each bind a purine D-ribonucleoside. Asp-204 (proton donor) is an active-site residue.

Belongs to the PNP/UDP phosphorylase family. Homohexamer; trimer of homodimers.

The enzyme catalyses a purine D-ribonucleoside + phosphate = a purine nucleobase + alpha-D-ribose 1-phosphate. The catalysed reaction is a purine 2'-deoxy-D-ribonucleoside + phosphate = a purine nucleobase + 2-deoxy-alpha-D-ribose 1-phosphate. Its function is as follows. Catalyzes the reversible phosphorolytic breakdown of the N-glycosidic bond in the beta-(deoxy)ribonucleoside molecules, with the formation of the corresponding free purine bases and pentose-1-phosphate. The chain is Purine nucleoside phosphorylase DeoD-type from Helicobacter pylori (strain J99 / ATCC 700824) (Campylobacter pylori J99).